The chain runs to 227 residues: dTTP/UTP pyrophosphatase (227 aa).

The active-site Proton acceptor is the D98.

It belongs to the Maf family. YhdE subfamily. A divalent metal cation serves as cofactor.

Its subcellular location is the cytoplasm. It catalyses the reaction dTTP + H2O = dTMP + diphosphate + H(+). The enzyme catalyses UTP + H2O = UMP + diphosphate + H(+). In terms of biological role, nucleoside triphosphate pyrophosphatase that hydrolyzes dTTP and UTP. May have a dual role in cell division arrest and in preventing the incorporation of modified nucleotides into cellular nucleic acids. This chain is dTTP/UTP pyrophosphatase, found in Bartonella quintana (strain Toulouse) (Rochalimaea quintana).